We begin with the raw amino-acid sequence, 205 residues long: MFEYVTGYVEYVGPEYVVIDHNGIGYQIFTPNPYVFQRSKQEIRVYTYHYVREDIMALYGFKTREERLLFTKLLGVSGIGPKGALAILASGQTGQVVQAIEHEDEKFLVKFPGVGKKTARQMILDLKGKLADVVPDAFVDLFSDTERFDEKKGTSAELDEALEALRALGYAEREVSRVVPELLKESLTTDQYIKKALSLLLNGKR.

Residues 1 to 62 (MFEYVTGYVE…EDIMALYGFK (62 aa)) are domain I. Residues 63–141 (TREERLLFTK…DVVPDAFVDL (79 aa)) form a domain II region. The interval 142–152 (FSDTERFDEKK) is flexible linker. Positions 153 to 205 (GTSAELDEALEALRALGYAEREVSRVVPELLKESLTTDQYIKKALSLLLNGKR) are domain III.

Belongs to the RuvA family. Homotetramer. Forms an RuvA(8)-RuvB(12)-Holliday junction (HJ) complex. HJ DNA is sandwiched between 2 RuvA tetramers; dsDNA enters through RuvA and exits via RuvB. An RuvB hexamer assembles on each DNA strand where it exits the tetramer. Each RuvB hexamer is contacted by two RuvA subunits (via domain III) on 2 adjacent RuvB subunits; this complex drives branch migration. In the full resolvosome a probable DNA-RuvA(4)-RuvB(12)-RuvC(2) complex forms which resolves the HJ.

Its subcellular location is the cytoplasm. Functionally, the RuvA-RuvB-RuvC complex processes Holliday junction (HJ) DNA during genetic recombination and DNA repair, while the RuvA-RuvB complex plays an important role in the rescue of blocked DNA replication forks via replication fork reversal (RFR). RuvA specifically binds to HJ cruciform DNA, conferring on it an open structure. The RuvB hexamer acts as an ATP-dependent pump, pulling dsDNA into and through the RuvAB complex. HJ branch migration allows RuvC to scan DNA until it finds its consensus sequence, where it cleaves and resolves the cruciform DNA. The protein is Holliday junction branch migration complex subunit RuvA of Bacillus cereus (strain G9842).